We begin with the raw amino-acid sequence, 372 residues long: Peptide chain release factor 2 (372 aa).

At Q253 the chain carries N5-methylglutamine.

This sequence belongs to the prokaryotic/mitochondrial release factor family. Methylated by PrmC. Methylation increases the termination efficiency of RF2.

The protein localises to the cytoplasm. Functionally, peptide chain release factor 2 directs the termination of translation in response to the peptide chain termination codons UGA and UAA. The protein is Peptide chain release factor 2 of Mycolicibacterium gilvum (strain PYR-GCK) (Mycobacterium gilvum (strain PYR-GCK)).